Here is an 879-residue protein sequence, read N- to C-terminus: Beta-mannosidase (879 aa).

A signal peptide spans 1-19 (MHLHLLLILALFRAGCVVA). 4 N-linked (GlcNAc...) asparagine glycosylation sites follow: Asn-35, Asn-77, Asn-89, and Asn-113. A disulfide bridge links Cys-167 with Cys-176. 190 to 192 (WDW) contributes to the substrate binding site. N-linked (GlcNAc...) asparagine glycans are attached at residues Asn-226, Asn-297, and Asn-302. Asn-456 serves as a coordination point for substrate. Glu-457 acts as the Proton donor in catalysis. Disulfide bonds link Cys-540–Cys-629, Cys-732–Cys-761, and Cys-764–Cys-769. Glu-554 acts as the Nucleophile in catalysis. N-linked (GlcNAc...) asparagine glycosylation occurs at Asn-736. 2 N-linked (GlcNAc...) asparagine glycosylation sites follow: Asn-803 and Asn-807.

This sequence belongs to the glycosyl hydrolase 2 family. In terms of assembly, monomer. In terms of tissue distribution, highest level in liver, high levels in lung, testis, skin and spleen, moderate level in thymus. Activity found in plasma, kidney, liver, spleen, pancreas, brain, testis, epididymis, heart, lung and skeletal muscle.

The protein localises to the lysosome. The enzyme catalyses Hydrolysis of terminal, non-reducing beta-D-mannose residues in beta-D-mannosides.. It participates in glycan metabolism; N-glycan degradation. Its function is as follows. Exoglycosidase that cleaves the single beta-linked mannose residue from the non-reducing end of all N-linked glycoprotein oligosaccharides. This Mus musculus (Mouse) protein is Beta-mannosidase.